We begin with the raw amino-acid sequence, 796 residues long: U-box domain-containing protein 51 (796 aa).

Disordered stretches follow at residues 163 to 195 (DMDT…SSHQ), 218 to 240 (TNIG…SLDV), and 270 to 292 (RSSQ…SSSQ). The span at 171-181 (ADDRSESRFSS) shows a compositional bias: basic and acidic residues. Residues 182 to 195 (DSHSGTVSSTSSHQ) are compositionally biased toward low complexity. Residues 270 to 291 (RSSQMEEASSSSTYSDPTSSSS) show a composition bias toward low complexity. Positions 298–407 (ELEKLKIELR…QRLEDALEGG (110 aa)) form a coiled coil. Positions 429-700 (FSDELKIGVG…DLGKEILPVL (272 aa)) constitute a Protein kinase domain. ATP is bound by residues 435–443 (IGVGGYGSV) and lysine 456. The active-site Proton acceptor is aspartate 557. The U-box domain maps to 724-796 (NAPTHFYCPI…IKEWRSQLIK (73 aa)).

It belongs to the protein kinase superfamily. Ser/Thr protein kinase family.

The enzyme catalyses L-seryl-[protein] + ATP = O-phospho-L-seryl-[protein] + ADP + H(+). It catalyses the reaction L-threonyl-[protein] + ATP = O-phospho-L-threonyl-[protein] + ADP + H(+). The catalysed reaction is S-ubiquitinyl-[E2 ubiquitin-conjugating enzyme]-L-cysteine + [acceptor protein]-L-lysine = [E2 ubiquitin-conjugating enzyme]-L-cysteine + N(6)-ubiquitinyl-[acceptor protein]-L-lysine.. It participates in protein modification; protein ubiquitination. Its function is as follows. Functions as an E3 ubiquitin ligase. In Arabidopsis thaliana (Mouse-ear cress), this protein is U-box domain-containing protein 51 (PUB51).